The following is a 242-amino-acid chain: Protein GrpE (242 aa).

The span at 1–10 (MAGENSSTET) shows a compositional bias: polar residues. The tract at residues 1-64 (MAGENSSTET…QSTESTSKEK (64 aa)) is disordered. A compositionally biased stretch (basic and acidic residues) spans 11–20 (KNQEINEKTP). 2 stretches are compositionally biased toward polar residues: residues 21–32 (EVQTFETNVEFE) and 40–59 (DTEL…STES).

It belongs to the GrpE family. In terms of assembly, homodimer.

The protein resides in the cytoplasm. Functionally, participates actively in the response to hyperosmotic and heat shock by preventing the aggregation of stress-denatured proteins, in association with DnaK and GrpE. It is the nucleotide exchange factor for DnaK and may function as a thermosensor. Unfolded proteins bind initially to DnaJ; upon interaction with the DnaJ-bound protein, DnaK hydrolyzes its bound ATP, resulting in the formation of a stable complex. GrpE releases ADP from DnaK; ATP binding to DnaK triggers the release of the substrate protein, thus completing the reaction cycle. Several rounds of ATP-dependent interactions between DnaJ, DnaK and GrpE are required for fully efficient folding. The sequence is that of Protein GrpE from Trichodesmium erythraeum (strain IMS101).